Consider the following 139-residue polypeptide: Metallothiol transferase FosB (139 aa).

The region spanning 4–119 is the VOC domain; that stretch reads GINHITYSVS…DGHKLELHTG (116 aa). Mg(2+) is bound by residues His-7, His-66, and Glu-115. Residue Glu-115 is the Proton donor/acceptor of the active site.

It belongs to the fosfomycin resistance protein family. FosB subfamily. As to quaternary structure, homodimer. Mg(2+) serves as cofactor.

Its subcellular location is the cytoplasm. In terms of biological role, metallothiol transferase which confers resistance to fosfomycin by catalyzing the addition of a thiol cofactor to fosfomycin. L-cysteine is probably the physiological thiol donor. This chain is Metallothiol transferase FosB, found in Staphylococcus epidermidis.